The primary structure comprises 333 residues: Galactinol synthase 5 (333 aa).

Lysine 103 is a catalytic residue. Mn(2+) is bound by residues aspartate 119, aspartate 121, and histidine 257.

It belongs to the glycosyltransferase 8 family. Galactosyltransferase subfamily. It depends on a divalent metal cation as a cofactor.

The protein localises to the cytoplasm. It carries out the reaction myo-inositol + UDP-alpha-D-galactose = alpha-D-galactosyl-(1-&gt;3)-1D-myo-inositol + UDP + H(+). Functionally, galactinol synthase involved in the biosynthesis of raffinose family oligosaccharides (RFOs) that function as osmoprotectants. May promote plant stress tolerance. In Arabidopsis thaliana (Mouse-ear cress), this protein is Galactinol synthase 5 (GOLS5).